The sequence spans 490 residues: ATP synthase subunit beta, chloroplastic (490 aa).

Residue 170–177 participates in ATP binding; the sequence is GGAGVGKT.

The protein belongs to the ATPase alpha/beta chains family. In terms of assembly, F-type ATPases have 2 components, CF(1) - the catalytic core - and CF(0) - the membrane proton channel. CF(1) has five subunits: alpha(3), beta(3), gamma(1), delta(1), epsilon(1). CF(0) has four main subunits: a(1), b(1), b'(1) and c(9-12).

It localises to the plastid. Its subcellular location is the chloroplast thylakoid membrane. It carries out the reaction ATP + H2O + 4 H(+)(in) = ADP + phosphate + 5 H(+)(out). In terms of biological role, produces ATP from ADP in the presence of a proton gradient across the membrane. The catalytic sites are hosted primarily by the beta subunits. In Calystegia sepium (Hedge bindweed), this protein is ATP synthase subunit beta, chloroplastic.